A 173-amino-acid polypeptide reads, in one-letter code: Crossover junction endodeoxyribonuclease RuvC (173 aa).

Catalysis depends on residues aspartate 8, glutamate 67, and aspartate 139. Mg(2+) is bound by residues aspartate 8, glutamate 67, and aspartate 139.

It belongs to the RuvC family. Homodimer which binds Holliday junction (HJ) DNA. The HJ becomes 2-fold symmetrical on binding to RuvC with unstacked arms; it has a different conformation from HJ DNA in complex with RuvA. In the full resolvosome a probable DNA-RuvA(4)-RuvB(12)-RuvC(2) complex forms which resolves the HJ. Mg(2+) is required as a cofactor.

The protein resides in the cytoplasm. It catalyses the reaction Endonucleolytic cleavage at a junction such as a reciprocal single-stranded crossover between two homologous DNA duplexes (Holliday junction).. The RuvA-RuvB-RuvC complex processes Holliday junction (HJ) DNA during genetic recombination and DNA repair. Endonuclease that resolves HJ intermediates. Cleaves cruciform DNA by making single-stranded nicks across the HJ at symmetrical positions within the homologous arms, yielding a 5'-phosphate and a 3'-hydroxyl group; requires a central core of homology in the junction. The consensus cleavage sequence is 5'-(A/T)TT(C/G)-3'. Cleavage occurs on the 3'-side of the TT dinucleotide at the point of strand exchange. HJ branch migration catalyzed by RuvA-RuvB allows RuvC to scan DNA until it finds its consensus sequence, where it cleaves and resolves the cruciform DNA. This is Crossover junction endodeoxyribonuclease RuvC from Shigella flexneri serotype 5b (strain 8401).